The following is a 603-amino-acid chain: Elongation factor 4 (603 aa).

The 183-residue stretch at 7-189 (VRIRNFCIIA…AVVERIPPPP (183 aa)) folds into the tr-type G domain. Residues 19–24 (DHGKST) and 136–139 (NKID) contribute to the GTP site.

This sequence belongs to the TRAFAC class translation factor GTPase superfamily. Classic translation factor GTPase family. LepA subfamily.

Its subcellular location is the cell inner membrane. The enzyme catalyses GTP + H2O = GDP + phosphate + H(+). Functionally, required for accurate and efficient protein synthesis under certain stress conditions. May act as a fidelity factor of the translation reaction, by catalyzing a one-codon backward translocation of tRNAs on improperly translocated ribosomes. Back-translocation proceeds from a post-translocation (POST) complex to a pre-translocation (PRE) complex, thus giving elongation factor G a second chance to translocate the tRNAs correctly. Binds to ribosomes in a GTP-dependent manner. In Trichormus variabilis (strain ATCC 29413 / PCC 7937) (Anabaena variabilis), this protein is Elongation factor 4.